The sequence spans 160 residues: Ribosomal RNA large subunit methyltransferase H (160 aa).

S-adenosyl-L-methionine contacts are provided by residues Leu76, Gly108, and 127–132 (FGFMTW).

The protein belongs to the RNA methyltransferase RlmH family. In terms of assembly, homodimer.

The protein resides in the cytoplasm. It carries out the reaction pseudouridine(1915) in 23S rRNA + S-adenosyl-L-methionine = N(3)-methylpseudouridine(1915) in 23S rRNA + S-adenosyl-L-homocysteine + H(+). Its function is as follows. Specifically methylates the pseudouridine at position 1915 (m3Psi1915) in 23S rRNA. The protein is Ribosomal RNA large subunit methyltransferase H of Bartonella henselae (strain ATCC 49882 / DSM 28221 / CCUG 30454 / Houston 1) (Rochalimaea henselae).